The chain runs to 155 residues: Ribosomal RNA large subunit methyltransferase H (155 aa).

Residues Leu73, Gly104, and Leu123–Leu128 contribute to the S-adenosyl-L-methionine site.

Belongs to the RNA methyltransferase RlmH family. In terms of assembly, homodimer.

The protein resides in the cytoplasm. It carries out the reaction pseudouridine(1915) in 23S rRNA + S-adenosyl-L-methionine = N(3)-methylpseudouridine(1915) in 23S rRNA + S-adenosyl-L-homocysteine + H(+). In terms of biological role, specifically methylates the pseudouridine at position 1915 (m3Psi1915) in 23S rRNA. This is Ribosomal RNA large subunit methyltransferase H from Azotobacter vinelandii (strain DJ / ATCC BAA-1303).